Reading from the N-terminus, the 338-residue chain is Ketol-acid reductoisomerase (NADP(+)) (338 aa).

The KARI N-terminal Rossmann domain maps to 1-181 (MQVYYDKDCD…GGGRSGIIET (181 aa)). NADP(+)-binding positions include 24 to 27 (YGSQ), Arg-47, Ser-50, Ser-52, and 82 to 85 (DEFQ). His-107 is an active-site residue. Gly-133 contributes to the NADP(+) binding site. The region spanning 182 to 327 (TFKDETETDL…GKLRAMMPWI (146 aa)) is the KARI C-terminal knotted domain. Positions 190, 194, 226, and 230 each coordinate Mg(2+). Ser-251 is a substrate binding site.

The protein belongs to the ketol-acid reductoisomerase family. The cofactor is Mg(2+).

The enzyme catalyses (2R)-2,3-dihydroxy-3-methylbutanoate + NADP(+) = (2S)-2-acetolactate + NADPH + H(+). It catalyses the reaction (2R,3R)-2,3-dihydroxy-3-methylpentanoate + NADP(+) = (S)-2-ethyl-2-hydroxy-3-oxobutanoate + NADPH + H(+). It functions in the pathway amino-acid biosynthesis; L-isoleucine biosynthesis; L-isoleucine from 2-oxobutanoate: step 2/4. It participates in amino-acid biosynthesis; L-valine biosynthesis; L-valine from pyruvate: step 2/4. Involved in the biosynthesis of branched-chain amino acids (BCAA). Catalyzes an alkyl-migration followed by a ketol-acid reduction of (S)-2-acetolactate (S2AL) to yield (R)-2,3-dihydroxy-isovalerate. In the isomerase reaction, S2AL is rearranged via a Mg-dependent methyl migration to produce 3-hydroxy-3-methyl-2-ketobutyrate (HMKB). In the reductase reaction, this 2-ketoacid undergoes a metal-dependent reduction by NADPH to yield (R)-2,3-dihydroxy-isovalerate. The polypeptide is Ketol-acid reductoisomerase (NADP(+)) (Saccharophagus degradans (strain 2-40 / ATCC 43961 / DSM 17024)).